The sequence spans 2617 residues: MESEEEQHMTTLLCMGFSDPATIRKALRLAKNDINEAVALLTNERPGLDYGGYEPMDSGGPSPGPGGGPRGDSGSDGSGPSRGGSTGGGGGFDPPPAYHEVVDAEKNDENGNCSGEGIEFPTTNLYELESRVLTDHWSIPYKREESLGKCLLASTYLARLGLSESDENCKRFMERCMPEAFKKLLTSSAVHKWGTEIHEGIYNMLMLLIELVAERMKQDPIPIGLLGVLTMAFNPDNEYHFKNRMKVSQRNWAEVFGEGNMFAISPVSTFQKEPHGWVVDLVNKFGELGGFAAIQAKLHSEDIELGAVSALVQPLGVCAEYLNSSVVQPMLDPVILTTIQDVRSVEEKDLKDKRLVSIPELLSAIKLLCMRFQPALVTTVDALRLDILLRMLKSPHFSAKMNSLKEVTKLIEDSTLSKSVKNAIDTDRLLDWLVENSVLSIALEGNIDQAQYCDRIKGIIELLGSKLSLDELTKIWKIQSGQSSTVIENIHTIIAAAAVKFNADQLNHLFVLIQKSWETESDRVRQKLLSLIGRIGREARFEATSGKVLDVLWELAHLPTLPSSLIQQALEEHLTILSDAYAVKEAVKRSYIIKCIEDIKRPGEWSSLEKNKKDGFKSSQLNNPQFVWVVPALRQLHEITRSFIKQTYQKQDKSIIQDLKKNFEIVKLVTGSLLACHRLAAAVAGPGGLTGLTLVDGRYTYREYLEAHLKFLAFFLQEATLYLGWNRAKEIWECLVTGQDVCELDREMCFEWFTKGQHDLESDVQQQLFKEKILKLESYEITMNGFNLFKTFFENVNLCDHRLKRQGAQLYVEKLELVGMDFIWKIAMESPDEEIANEAIQLIINYSYINLNPRLKKDSVSLHKKFIADCYTRLEAASSALGGPTLTHAVTRATKMLTATAMPTVATSVQSPYRSTKLVIIERLLLLAERYVITIEDFYSVPRTILPHGASFHGHLLTLNVTYESTKDTFTVEAHSNETIGSVRWKIAKQLCSPVDNIQIFTNDSLLTVNKDQKLLHQLGFSDEQVLTVKTSGSGTPSGSSADSSTSSSSSSSGAFSSSYAMEQEKSLPGVVMALVCNVFDMLYQLANLEEPRITLRVRKLLLLIPTDPAIQEALDQLDSLGRKKTLLSETSSQSSKSPSLSSKQQHQPSASSILESLFRSFAPGMSTFRVLYNLEVLSSKLMPTADDDMARSCAKSFCENFLKAGGLSLVVNVMQRDSIPSEVDYETRQGVYSICLQLARFLLVGQTMPTSLDEDLTKDGIEALSSRPFRNVSRQTSRQMSLCGTPEKSSYRQLSVSDRSSIRVEEIIPAARVAIQTMEASDFTATVACFMRLSWAAAAGRLDLVGSSQPIKESNSLFPAGIRSRLSSSGSNCSSSSEGEPAALHAGICVRQQSVSTKDALIAGEALSLLVTCLQLRSQQLASFYSLPCVADFIIDILLGSPSAEIRRVACDQLYTLSQTDTSAHPEVQKPNQFLLGVILTAQLPLWSPTSIMRGVNQRLLSQCMEYFDLRCQLLDDLTTSEMDQLRISPATMLEDEITWLDNFEPNRTADCETSEADNILLAGHLRLIKTLLSLCGAEKEMLGSSLIKPLLDDFLFRASRIIVNSHSPASSAAISQQDFHPKCSTVNSRLAAYEVLVMLADSSPSNLQIITKELLSMHHQPDPALTKEFDYLPPVDSRSSSGFVGLRNGGATCYMNAVFQQLYMQPGLPESLLSVDDDTDNPDDSVFYQVQSLFGHLMESKLQYYVPENFWKIFKMWNKELYVREQQDAYEFFTSLIDQMDEYLKKMGREQIFKNTFQGIYSDQKICKDCPHRYEREEAFMALNLGVTSCQSLEISLDQFVRGEVLEGSNAYYCEKCKEKRITVKRTCIKSLPSVLVIHLMRFGFDWESGRSIKYDEQIRFPWMLNMEPYTVAGMARQDSSSEVGENGRNMDQGGGGSPRKKVALTENYELVGVIVHSGQAHAGHYYSFIKDRRGCGKGKWYKFNDTVIEEFDLNDETLEYECFGGEYRPKVYDQTNPYTDVRRRYWNAYMLFYQRVSDQNSPVLPKKSRVSVVRQEAEDLSLSAPSSPEISPQSSPRPHRPNNDRLSILTKLVKKGEKKGLFVEKMPARIYQMVRDENLKFMKNRDVYSSDYFSFVLSLASLNATKLKHPYYPCMAKVSLQLAIQFLFQTYLRTKKKLRVDTEEWIATIEALLSKSLDACQWLVEYFISSEGRELVKVFLLECSVREVRVAVATILEKTLDSALFYQDKLKSLHQLLEVLLALLDKDVPENCKNCAQYFSLFNTFVQKQGIRAGDLLLRHSALRHMISFLLGVSRQNSQIRRWSSAQAREFGNLHNTVALLVLHSDVSSQRNVAPGIFKQRPPISVAPSSPLLPLHEEVEALLFLSEGKPYLLEVMFALRELTGSLLALMEMVVYCCFCNEHFSFTMLHFIKNQLETAPPHELKNTFQLLHEVLVIEDPIQVERVKFVFETENGLLALMHHSNHVDSSRCYQCVKFLVTLAQKCPAAKEYFKENSHHWSWAVQWLQKKMSEHYWTPQSNVSNETSTGKTFQRTISAQDTLAYATALLNEKEQSGSSNGSESSPANENGERHLQQGSESPMMIGELRSDLDDVDP.

Positions 3–44 (SEEEQHMTTLLCMGFSDPATIRKALRLAKNDINEAVALLTNE) constitute a UBA domain. Residues 45–99 (RPGLDYGGYEPMDSGGPSPGPGGGPRGDSGSDGSGPSRGGSTGGGGGFDPPPAYH) are disordered. Residues Ser-62 and Ser-85 each carry the phosphoserine modification. Over residues 65–92 (PGGGPRGDSGSDGSGPSRGGSTGGGGGF) the composition is skewed to gly residues. Tyr-939 bears the Phosphotyrosine mark. Disordered regions lie at residues 1030 to 1056 (KTSGSGTPSGSSADSSTSSSSSSSGAF) and 1127 to 1148 (LLSETSSQSSKSPSLSSKQQHQ). Composition is skewed to low complexity over residues 1031 to 1056 (TSGSGTPSGSSADSSTSSSSSSSGAF) and 1128 to 1148 (LSETSSQSSKSPSLSSKQQHQ). 2 positions are modified to phosphoserine: Ser-1138 and Ser-1282. Residues 1686-2039 (VGLRNGGATC…NAYMLFYQRV (354 aa)) form the USP domain. Cys-1695 acts as the Nucleophile in catalysis. A disordered region spans residues 1920 to 1942 (QDSSSEVGENGRNMDQGGGGSPR). Ser-1940 is subject to Phosphoserine. The active-site Proton acceptor is His-1967. Phosphoserine occurs at positions 2044, 2074, and 2558. A disordered region spans residues 2060-2087 (AEDLSLSAPSSPEISPQSSPRPHRPNND). The segment covering 2066–2079 (SAPSSPEISPQSSP) has biased composition (low complexity). Phosphothreonine is present on Thr-2562. The segment at 2572–2617 (EKEQSGSSNGSESSPANENGERHLQQGSESPMMIGELRSDLDDVDP) is disordered. Low complexity predominate over residues 2576–2589 (SGSSNGSESSPANE). Ser-2601 bears the Phosphoserine mark. Residues 2608–2617 (LRSDLDDVDP) show a composition bias toward basic and acidic residues.

It belongs to the peptidase C19 family.

The enzyme catalyses Thiol-dependent hydrolysis of ester, thioester, amide, peptide and isopeptide bonds formed by the C-terminal Gly of ubiquitin (a 76-residue protein attached to proteins as an intracellular targeting signal).. Functionally, protease that can remove conjugated ubiquitin from target proteins and polyubiquitin chains. Deubiquitinates DDB2, preventing its proteasomal degradation. In Mus musculus (Mouse), this protein is Ubiquitin carboxyl-terminal hydrolase 24 (Usp24).